The primary structure comprises 143 residues: MLSTNSEQTRRKPNAVDAHVGQRIRQRREWQNMSQTTLGEAIGVTFQQVQKYEKGVNRVGAGRLQQISKALKVEPSYFFEDTLNKIRSEERSASNQINIPPEVVEFVVSKEGIELIRAFSRVGDYRVRRRIVMLVKSLGAHER.

Residues Ile-24 to Phe-78 form the HTH cro/C1-type domain. Residues Gln-35–Lys-54 constitute a DNA-binding region (H-T-H motif).

This is an uncharacterized protein from Sinorhizobium fredii (strain NBRC 101917 / NGR234).